Consider the following 226-residue polypeptide: Ribonuclease 3 (226 aa).

Residues 7 to 129 enclose the RNase III domain; that stretch reads DARLQQALGY…LFGAVFLDAG (123 aa). Residue Glu-42 coordinates Mg(2+). Asp-46 is a catalytic residue. Residues Asp-115 and Glu-118 each contribute to the Mg(2+) site. Residue Glu-118 is part of the active site. Residues 156–226 form the DRBM domain; sequence DPKTRLQEIL…ARQACAELQR (71 aa).

It belongs to the ribonuclease III family. As to quaternary structure, homodimer. Requires Mg(2+) as cofactor.

It is found in the cytoplasm. It carries out the reaction Endonucleolytic cleavage to 5'-phosphomonoester.. In terms of biological role, digests double-stranded RNA. Involved in the processing of primary rRNA transcript to yield the immediate precursors to the large and small rRNAs (23S and 16S). Processes some mRNAs, and tRNAs when they are encoded in the rRNA operon. Processes pre-crRNA and tracrRNA of type II CRISPR loci if present in the organism. The sequence is that of Ribonuclease 3 from Thiobacillus denitrificans (strain ATCC 25259 / T1).